We begin with the raw amino-acid sequence, 54 residues long: Synaptosomal-associated protein 25 (54 aa).

This sequence belongs to the SNAP-25 family. Part of the SNARE core complex containing SNAP25, VAMP2 and STX1A; this complex binds CPLX1. Found in a complex containing SYT1, SV2B and syntaxin-1. Found in a ternary complex with STX1A and VAMP8. Interacts with HSC70 and with SYT9, forming a complex with DNAJC5. The interaction with SYT9 is inhibited in presence of calcium. Isoform 1 and isoform 2 interact with BLOC1S6. Interacts with CENPF. Interacts with EQTN. Interacts with HGS. Interacts with KCNB1 (via N-terminus); reduces the voltage-dependent potassium channel KCNB1 activity in pancreatic beta cells. Interacts with OTOF. Interacts with RIMS1. Interacts with SNAPIN. Interacts with STXBP6. Interacts with TRIM9. Interacts with ZDHHC13 (via ANK repeats). Interacts with ZDHHC17 (via ANK repeats). Associates with the BLOC-1 complex. Interacts with PLCL1 (via C2 domain). Interacts with PRRT2; this interaction may impair the formation of the SNARE complex. Interacts with alpha-synuclein/SNCA. Interacts with PRPH2. Interacts with ROM1. Interacts with STX3. Post-translationally, the N-terminus is blocked.

Its subcellular location is the cytoplasm. The protein localises to the perinuclear region. It localises to the cell membrane. The protein resides in the synapse. It is found in the synaptosome. Its subcellular location is the photoreceptor inner segment. Its function is as follows. t-SNARE involved in the molecular regulation of neurotransmitter release. May play an important role in the synaptic function of specific neuronal systems. Associates with proteins involved in vesicle docking and membrane fusion. Regulates plasma membrane recycling through its interaction with CENPF. Modulates the gating characteristics of the delayed rectifier voltage-dependent potassium channel KCNB1 in pancreatic beta cells. The protein is Synaptosomal-associated protein 25 (SNAP25) of Oryctolagus cuniculus (Rabbit).